Here is a 340-residue protein sequence, read N- to C-terminus: Integral membrane protein SED5 (340 aa).

The Cytoplasmic portion of the chain corresponds to 1 to 319; that stretch reads MNIKDRTSEF…KYFDRIKSNR (319 aa). The tract at residues 31 to 51 is disordered; sequence RLQEKESENFANNTTGNGKSV. The span at 39 to 51 shows a compositional bias: polar residues; it reads NFANNTTGNGKSV. A coiled-coil region spans residues 146 to 173; sequence LNTQMKNISGSFKDVLEERQRLEMANKD. The tract at residues 180–231 is disordered; the sequence is TDTGHAPADDQTQSNHAADLTTYNNSNPFMTSLLDESSEKNNNSSNQGELSF. Positions 189–209 are enriched in polar residues; it reads DQTQSNHAADLTTYNNSNPFM. In terms of domain architecture, t-SNARE coiled-coil homology spans 249–311; sequence NVYLQERNRA…SGAQRELLKY (63 aa). A helical; Anchor for type IV membrane protein transmembrane segment spans residues 320-340; it reads WLAAKVFFIIFVFFVIWVLVN.

The protein belongs to the syntaxin family. Interacts with SLY1, STF1, SFB3 and GOS1.

The protein resides in the membrane. Its subcellular location is the golgi apparatus membrane. In terms of biological role, required for vesicular transport between the endoplasmic reticulum and the Golgi complex. Acts as a target organelle soluble NSF attachment protein receptor (t-SNARE). The protein is Integral membrane protein SED5 (SED5) of Saccharomyces cerevisiae (strain ATCC 204508 / S288c) (Baker's yeast).